A 412-amino-acid polypeptide reads, in one-letter code: Isocitrate dehydrogenase [NADP] (412 aa).

Threonine 100 contributes to the NADP(+) binding site. Positions 109, 111, 115, 125, and 149 each coordinate D-threo-isocitrate. Aspartate 301 serves as a coordination point for Mg(2+). NADP(+) contacts are provided by residues 333-339 (HGSAPKY), asparagine 346, tyrosine 385, and arginine 389.

It belongs to the isocitrate and isopropylmalate dehydrogenases family. Homodimer. Requires Mg(2+) as cofactor. Mn(2+) serves as cofactor.

It carries out the reaction D-threo-isocitrate + NADP(+) = 2-oxoglutarate + CO2 + NADPH. Functionally, catalyzes the oxidative decarboxylation of isocitrate to 2-oxoglutarate and carbon dioxide with the concomitant reduction of NADP(+). NAD(+) can replace NADP(+) with low efficiency. This is Isocitrate dehydrogenase [NADP] from Archaeoglobus fulgidus (strain ATCC 49558 / DSM 4304 / JCM 9628 / NBRC 100126 / VC-16).